We begin with the raw amino-acid sequence, 275 residues long: Formamidopyrimidine-DNA glycosylase (275 aa).

Pro2 (schiff-base intermediate with DNA) is an active-site residue. The Proton donor role is filled by Glu3. The Proton donor; for beta-elimination activity role is filled by Lys58. His89, Arg108, and Lys151 together coordinate DNA. An FPG-type; degenerate zinc finger spans residues 236-275 (KVYDRAGQPCERCPGPAACAGISRTVQSGRATYFCARTQK). The active-site Proton donor; for delta-elimination activity is the Arg265.

Belongs to the FPG family. In terms of assembly, monomer. Zn(2+) serves as cofactor.

The catalysed reaction is Hydrolysis of DNA containing ring-opened 7-methylguanine residues, releasing 2,6-diamino-4-hydroxy-5-(N-methyl)formamidopyrimidine.. The enzyme catalyses 2'-deoxyribonucleotide-(2'-deoxyribose 5'-phosphate)-2'-deoxyribonucleotide-DNA = a 3'-end 2'-deoxyribonucleotide-(2,3-dehydro-2,3-deoxyribose 5'-phosphate)-DNA + a 5'-end 5'-phospho-2'-deoxyribonucleoside-DNA + H(+). Functionally, involved in base excision repair of DNA damaged by oxidation or by mutagenic agents. Acts as a DNA glycosylase that recognizes and removes damaged bases. Has a preference for oxidized purines, such as 7,8-dihydro-8-oxoguanine (8-oxoG). Has AP (apurinic/apyrimidinic) lyase activity and introduces nicks in the DNA strand. Cleaves the DNA backbone by beta-delta elimination to generate a single-strand break at the site of the removed base with both 3'- and 5'-phosphates. In Acidiphilium cryptum (strain JF-5), this protein is Formamidopyrimidine-DNA glycosylase.